Here is a 202-residue protein sequence, read N- to C-terminus: Potassium-transporting ATPase KdpC subunit 1 (202 aa).

The helical transmembrane segment at 17–37 threads the bilayer; that stretch reads LWVIAAVIYPFFMIAVGQIVF.

This sequence belongs to the KdpC family. The system is composed of three essential subunits: KdpA, KdpB and KdpC.

Its subcellular location is the cell inner membrane. Part of the high-affinity ATP-driven potassium transport (or Kdp) system, which catalyzes the hydrolysis of ATP coupled with the electrogenic transport of potassium into the cytoplasm. This subunit acts as a catalytic chaperone that increases the ATP-binding affinity of the ATP-hydrolyzing subunit KdpB by the formation of a transient KdpB/KdpC/ATP ternary complex. The polypeptide is Potassium-transporting ATPase KdpC subunit 1 (Nostoc sp. (strain PCC 7120 / SAG 25.82 / UTEX 2576)).